Consider the following 189-residue polypeptide: Low affinity inorganic phosphate transporter 2 (189 aa).

At Thr-1–Arg-55 the chain is on the cytoplasmic side. The chain crosses the membrane as a helical span at residues His-56–Ser-76. Residues Gln-77–Thr-111 are Extracellular-facing. A helical transmembrane segment spans residues Leu-112–Ile-132. Residues Gly-133–Arg-134 lie on the Cytoplasmic side of the membrane. A helical membrane pass occupies residues Phe-135–Pro-155. Residues Tyr-156 to Arg-165 are Extracellular-facing. The helical transmembrane segment at Ile-166–Thr-186 threads the bilayer. Residues Thr-187 to Val-189 lie on the Cytoplasmic side of the membrane.

This sequence belongs to the major facilitator superfamily. Phosphate:H(+) symporter (TC 2.A.1.9) family.

The protein localises to the cell membrane. The enzyme catalyses phosphate(in) + H(+)(in) = phosphate(out) + H(+)(out). Its function is as follows. Low-affinity transporter for external inorganic phosphate (Pi). This is Low affinity inorganic phosphate transporter 2 from Petunia hybrida (Petunia).